Here is a 291-residue protein sequence, read N- to C-terminus: Formamidopyrimidine-DNA glycosylase (291 aa).

Residue Pro2 is the Schiff-base intermediate with DNA of the active site. Residue Glu3 is the Proton donor of the active site. The active-site Proton donor; for beta-elimination activity is the Lys58. DNA contacts are provided by His100, Arg123, and Lys166. The segment at 257–291 (SVYGREGKECFQCGIPITRISQSGRSSFYCSQCQK) adopts an FPG-type zinc-finger fold. Residue Arg281 is the Proton donor; for delta-elimination activity of the active site.

It belongs to the FPG family. Monomer. Requires Zn(2+) as cofactor.

The catalysed reaction is Hydrolysis of DNA containing ring-opened 7-methylguanine residues, releasing 2,6-diamino-4-hydroxy-5-(N-methyl)formamidopyrimidine.. It catalyses the reaction 2'-deoxyribonucleotide-(2'-deoxyribose 5'-phosphate)-2'-deoxyribonucleotide-DNA = a 3'-end 2'-deoxyribonucleotide-(2,3-dehydro-2,3-deoxyribose 5'-phosphate)-DNA + a 5'-end 5'-phospho-2'-deoxyribonucleoside-DNA + H(+). Its function is as follows. Involved in base excision repair of DNA damaged by oxidation or by mutagenic agents. Acts as a DNA glycosylase that recognizes and removes damaged bases. Has a preference for oxidized purines, such as 7,8-dihydro-8-oxoguanine (8-oxoG). Has AP (apurinic/apyrimidinic) lyase activity and introduces nicks in the DNA strand. Cleaves the DNA backbone by beta-delta elimination to generate a single-strand break at the site of the removed base with both 3'- and 5'-phosphates. The polypeptide is Formamidopyrimidine-DNA glycosylase (Bartonella quintana (strain Toulouse) (Rochalimaea quintana)).